The sequence spans 284 residues: MLSKQIPLGIYEKALPAGECWLERLQLAKTLGFDFVEMSVDETDDRLSRLNWSREQRLALVNAIVETGVRVPSMCLSAHRRFPLGSEDDAVRAQGLEIMRKAIQFAQDVGIRVIQLAGYDVYYQEANNETRRRFRDGLKESVEMASRAQVTLAMEIMDYPLMSSISKALGYAHYLNNPWFQLYPDIGNLSAWDNDVQMELQAGIGHIVAVHVKDTKPGVFKNVPFGEGVVDFERCFETLKQSGYCGPYLIEMWSETAEDPAAEVAKARDWVKARMAKAGMVEAA.

The protein belongs to the L-ribulose-5-phosphate 3-epimerase family.

It catalyses the reaction L-ribulose 5-phosphate = L-xylulose 5-phosphate. It functions in the pathway cofactor degradation; L-ascorbate degradation; D-xylulose 5-phosphate from L-ascorbate: step 3/4. Its function is as follows. Catalyzes the isomerization of L-xylulose-5-phosphate to L-ribulose-5-phosphate. Is involved in the anaerobic L-ascorbate utilization. The chain is L-ribulose-5-phosphate 3-epimerase UlaE from Escherichia coli (strain K12 / MC4100 / BW2952).